A 437-amino-acid chain; its full sequence is GTPase Der (437 aa).

EngA-type G domains are found at residues 4 to 167 (PVVA…AEKD) and 175 to 352 (IRFS…DHQH). GTP contacts are provided by residues 10–17 (GRPNVGKS), 57–61 (DTGGI), 119–122 (NKVD), 181–188 (GRPNVGKS), 229–233 (DTAGI), and 294–297 (NKWD). The region spanning 353–437 (RRIQSAVLND…PIRLIKRRRK (85 aa)) is the KH-like domain.

The protein belongs to the TRAFAC class TrmE-Era-EngA-EngB-Septin-like GTPase superfamily. EngA (Der) GTPase family. Associates with the 50S ribosomal subunit.

Its function is as follows. GTPase that plays an essential role in the late steps of ribosome biogenesis. The polypeptide is GTPase Der (Limosilactobacillus fermentum (strain NBRC 3956 / LMG 18251) (Lactobacillus fermentum)).